A 522-amino-acid chain; its full sequence is Cytochrome b mRNA maturase bI3 (522 aa).

Residues 1–31 (MTIRKSNPYLSLVNSYLMDSPQPSSMNYWWN) are Mitochondrial matrix-facing. The interval 1 to 163 (MTIRKSNPYL…MPFMGGDLVP (163 aa)) is cytochrome b. Residues 32 to 52 (VGSLLGLCLVMQMASGMFLAM) form a helical membrane-spanning segment. The Mitochondrial intermembrane segment spans residues 53–84 (HYSSSMELAFNSVEHMMRDVNAGWLMRYIHAN). A helical membrane pass occupies residues 85 to 105 (GASFFFMCLYLHMGKALYYGS). The Mitochondrial matrix portion of the chain corresponds to 106–110 (YKSPR). Residues 111–131 (VLVWSMGVMMFMLTMATAFMG) traverse the membrane as a helical segment. The Mitochondrial intermembrane segment spans residues 132-154 (YCLVYGQMSHWGATVITNLLSAM). The helical transmembrane segment at 155-175 (PFMGGDLVPLSIILSLYLLYI) threads the bilayer. Positions 164 to 522 (LSIILSLYLL…PYMSWHQKEQ (359 aa)) are maturase. Over 176–522 (SLKTFMKMIF…PYMSWHQKEQ (347 aa)) the chain is Mitochondrial matrix.

In the N-terminal section; belongs to the cytochrome b family. This sequence in the C-terminal section; belongs to the LAGLIDADG endonuclease family.

The protein resides in the mitochondrion inner membrane. Mitochondrial mRNA maturase required for splicing of intron 3 of the cytochrome b (COB) gene, containing its own coding sequence. The polypeptide is Cytochrome b mRNA maturase bI3 (bI3) (Debaryomyces hansenii (strain ATCC 36239 / CBS 767 / BCRC 21394 / JCM 1990 / NBRC 0083 / IGC 2968) (Yeast)).